The sequence spans 604 residues: Nuclear factor erythroid 2-related factor 2 (604 aa).

Positions 29–31 (DLG) match the DLG motif motif. A Phosphoserine; by PKC modification is found at Ser-40. Residues 79 to 82 (ETGE) carry the ETGE motif motif. Ser-214 is subject to Phosphoserine. Residues 334-447 (TVEFNDSDSG…VPFTKDKHSS (114 aa)) form a disordered region. Composition is skewed to polar residues over residues 340–352 (SDSGISLNTSPSR) and 395–407 (PTHSSGDTVQPLS). Residues Lys-461, Lys-471, and Lys-486 are each glycosylated (N-linked (Glc) (glycation) lysine). Positions 496–559 (LIRDIRRRGK…HLLKRKLSTL (64 aa)) constitute a bZIP domain. A glycan (N-linked (Glc) (glycation) arginine) is linked at Arg-498. A basic motif region spans residues 498-517 (RDIRRRGKNKVAAQNCRKRK). The tract at residues 521 to 528 (IVELEQDL) is leucine-zipper. A glycan (N-linked (Glc) (glycation) arginine) is linked at Arg-568. A disordered region spans residues 570 to 604 (EDGKPYSPSEYSLQQTRDGNVFLVPKSKKPDTKKN). Lys-573 carries N-linked (Glc) (glycation) lysine glycosylation. The span at 578-587 (SEYSLQQTRD) shows a compositional bias: polar residues. The segment at 590–595 (VFLVPK) is mediates interaction with CHD6 and is necessary to activate transcription. An N6-acetyllysine; by CREBBP mark is found at Lys-595 and Lys-598.

The protein belongs to the bZIP family. CNC subfamily. In terms of assembly, heterodimer; heterodimerizes with small Maf proteins. Interacts (via the bZIP domain) with MAFG and MAFK; required for binding to antioxidant response elements (AREs) on DNA. Interacts with KEAP1; the interaction is direct and promotes ubiquitination by the BCR(KEAP1) E3 ubiquitin ligase complex. Forms a ternary complex with PGAM5 and KEAP1. Interacts with EEF1D at heat shock promoter elements (HSE). Interacts via its leucine-zipper domain with the coiled-coil domain of PMF1. Interacts with CHD6; involved in activation of the transcription. Interacts with ESRRB; represses NFE2L2 transcriptional activity. Interacts with MOTS-c, a peptide produced by the mitochondrially encoded 12S rRNA MT-RNR1; the interaction occurs in the nucleus following metabolic stress. Post-translationally, ubiquitinated in the cytoplasm by the BCR(KEAP1) E3 ubiquitin ligase complex leading to its degradation. In response to oxidative stress, electrophile metabolites, such as sulforaphane, modify KEAP1, leading to inhibit activity of the BCR(KEAP1) complex, promoting NFE2L2/NRF2 nuclear accumulation and activity. In response to autophagy, the BCR(KEAP1) complex is inactivated. In terms of processing, phosphorylated by EIF2AK3/PERK following unfolded protein response (UPR), promoting dissociation from its cytoplasmic inhibitor KEAP1, followed by its translocation into the nucleus. Phosphorylation of Ser-40 by PKC in response to oxidative stress dissociates NFE2L2 from its cytoplasmic inhibitor KEAP1, promoting its translocation into the nucleus. Acetylation at Lys-595 and Lys-598 increases nuclear localization whereas deacetylation by SIRT1 enhances cytoplasmic presence. Post-translationally, glycation impairs transcription factor activity by preventing heterodimerization with small Maf proteins. Deglycation by FN3K restores activity.

The protein localises to the cytoplasm. It localises to the cytosol. It is found in the nucleus. Transcription factor that plays a key role in the response to oxidative stress: binds to antioxidant response (ARE) elements present in the promoter region of many cytoprotective genes, such as phase 2 detoxifying enzymes, and promotes their expression, thereby neutralizing reactive electrophiles. In normal conditions, ubiquitinated and degraded in the cytoplasm by the BCR(KEAP1) complex. In response to oxidative stress, electrophile metabolites inhibit activity of the BCR(KEAP1) complex, promoting nuclear accumulation of NFE2L2/NRF2, heterodimerization with one of the small Maf proteins and binding to ARE elements of cytoprotective target genes. The NFE2L2/NRF2 pathway is also activated in response to selective autophagy: autophagy promotes interaction between KEAP1 and SQSTM1/p62 and subsequent inactivation of the BCR(KEAP1) complex, leading to NFE2L2/NRF2 nuclear accumulation and expression of cytoprotective genes. The NFE2L2/NRF2 pathway is also activated during the unfolded protein response (UPR), contributing to redox homeostasis and cell survival following endoplasmic reticulum stress. May also be involved in the transcriptional activation of genes of the beta-globin cluster by mediating enhancer activity of hypersensitive site 2 of the beta-globin locus control region. Also plays an important role in the regulation of the innate immune response. It is a critical regulator of the innate immune response and survival during sepsis by maintaining redox homeostasis and restraint of the dysregulation of pro-inflammatory signaling pathways like MyD88-dependent and -independent and TNF-alpha signaling. Suppresses macrophage inflammatory response by blocking pro-inflammatory cytokine transcription and the induction of IL6. Binds to the proximity of pro-inflammatory genes in macrophages and inhibits RNA Pol II recruitment. The inhibition is independent of the Nrf2-binding motif and reactive oxygen species level. Represses antiviral cytosolic DNA sensing by suppressing the expression of the adapter protein STING1 and decreasing responsiveness to STING1 agonists while increasing susceptibility to infection with DNA viruses. The sequence is that of Nuclear factor erythroid 2-related factor 2 from Rattus norvegicus (Rat).